We begin with the raw amino-acid sequence, 711 residues long: Polyribonucleotide nucleotidyltransferase (711 aa).

Residues aspartate 486 and aspartate 492 each coordinate Mg(2+). The region spanning 553–612 (PRIHTIKINPDKIKDVIGKGGSVIRALTEETGTTIEIEDDGTVKIAATDGEKAKHAIRRI) is the KH domain. An S1 motif domain is found at 622-690 (GRVYTGKVTR…RQGRIRLSIK (69 aa)). The segment at 689 to 711 (IKEATEQSQPAAAPEAPAAEQGE) is disordered. The span at 694 to 711 (EQSQPAAAPEAPAAEQGE) shows a compositional bias: low complexity.

It belongs to the polyribonucleotide nucleotidyltransferase family. Component of the RNA degradosome, which is a multiprotein complex involved in RNA processing and mRNA degradation. Mg(2+) is required as a cofactor.

The protein localises to the cytoplasm. The enzyme catalyses RNA(n+1) + phosphate = RNA(n) + a ribonucleoside 5'-diphosphate. Functionally, involved in mRNA degradation. Catalyzes the phosphorolysis of single-stranded polyribonucleotides processively in the 3'- to 5'-direction. The chain is Polyribonucleotide nucleotidyltransferase from Escherichia coli O8 (strain IAI1).